Reading from the N-terminus, the 159-residue chain is Membrane protein FAM174B (159 aa).

An N-terminal signal peptide occupies residues 1 to 27; sequence MRAALPPARLLPLLLLLALLGAPAARA. The tract at residues 28–73 is disordered; the sequence is SRAQSAAPPQPGAERQPRPPPGPGPGNATGTGSGEAAGGGGSSNSS. At 28-90 the chain is on the extracellular side; the sequence is SRAQSAAPPQ…ISSLLRDLHT (63 aa). Residues 52 to 69 are compositionally biased toward gly residues; sequence PGNATGTGSGEAAGGGGS. Residue asparagine 54 is glycosylated (N-linked (GlcNAc...) asparagine). Residues 91 to 111 form a helical membrane-spanning segment; sequence LKAAVIVACAFTAFLIACLLL. Residues 112–159 lie on the Cytoplasmic side of the membrane; that stretch reads RVFRSGKRLKKTRKYDIITTPAERVEMAPLNEEDDEDEDSTVFDIKYR.

It belongs to the FAM174 family.

Its subcellular location is the cell membrane. The protein resides in the golgi apparatus. Essential for Golgi structural integrity. The polypeptide is Membrane protein FAM174B (FAM174B) (Bos taurus (Bovine)).